The chain runs to 159 residues: MSTDLNYSATRDPFSALGLDVGNRRIGVAGSDGLGLLATGLGVIRRRSLPEDIAQVQAWIRRRQATVVVVGIPLLADGSVGSQARKVQRFVRALQAAVDLPVVTVNEYLSTVQAEWDLRQAGIPAKAQKALIDQQSAAVILQTWLDERRYSQSSKAPCR.

It belongs to the YqgF nuclease family.

The protein resides in the cytoplasm. Functionally, could be a nuclease involved in processing of the 5'-end of pre-16S rRNA. The chain is Putative pre-16S rRNA nuclease from Synechococcus sp. (strain JA-3-3Ab) (Cyanobacteria bacterium Yellowstone A-Prime).